Here is a 435-residue protein sequence, read N- to C-terminus: 3-ketoacyl-CoA thiolase (435 aa).

Cys98 (acyl-thioester intermediate) is an active-site residue. Residues His391 and Cys421 each act as proton acceptor in the active site.

Belongs to the thiolase-like superfamily. Thiolase family. In terms of assembly, heterotetramer of two alpha chains (FadJ) and two beta chains (FadI).

It is found in the cytoplasm. It carries out the reaction an acyl-CoA + acetyl-CoA = a 3-oxoacyl-CoA + CoA. It participates in lipid metabolism; fatty acid beta-oxidation. In terms of biological role, catalyzes the final step of fatty acid oxidation in which acetyl-CoA is released and the CoA ester of a fatty acid two carbons shorter is formed. The polypeptide is 3-ketoacyl-CoA thiolase (Vibrio cholerae serotype O1 (strain ATCC 39315 / El Tor Inaba N16961)).